The following is a 243-amino-acid chain: Probable aquaporin SIP1-2 (243 aa).

Transmembrane regions (helical) follow at residues 12–32 (VITF…AAIV) and 42–62 (WAPL…FTVI). An NPA 1 motif is present at residues 72 to 74 (NPC). A run of 3 helical transmembrane segments spans residues 90–110 (FSLA…AITI), 135–155 (GAIS…LIIL), and 162–182 (LAKT…GSKF). Positions 188 to 190 (NPA) match the NPA 2 motif. A helical transmembrane segment spans residues 210–230 (VYWISSYTGAILSAMLFRIIF).

This sequence belongs to the MIP/aquaporin (TC 1.A.8) family. SIP (TC 1.A.8.10) subfamily. In terms of tissue distribution, expressed in roots and above ground. Expressed in elongating regions of the root tips, cotyledons, minor veins and hydathode cells of the rosette leaves. Weakly expressed in vascular tissues of the flower petals, filaments of stamens, upper part of the styles and receptacles of the siliques.

Its subcellular location is the endoplasmic reticulum membrane. Functionally, water channel required to facilitate the transport of water across cell membrane. The chain is Probable aquaporin SIP1-2 (SIP1-2) from Arabidopsis thaliana (Mouse-ear cress).